The sequence spans 313 residues: Intelectin-like protein (313 aa).

One can recognise a Fibrinogen C-terminal domain in the interval Thr33–Cys251. Ca(2+) is bound by residues His86, Glu87, Asn89, Gly92, Gly97, Asp98, and Asp133. 3 disulfide bridges follow: Cys94–Cys280, Cys199–Cys259, and Cys251–Cys265. Residues Asn260, Glu262, Glu274, and Asp282 each coordinate Ca(2+). A carbohydrate is bound by residues Glu262 to His263 and Glu274.

As to quaternary structure, monomer, homodimer, homotrimer and homotetramer. Mostly monomeric or dimeric.

It localises to the secreted. Functionally, binds mannan, mannose and, to a lesser degree, D-lactose, N-acetylgalactosamine, N-acetylglucosamine and beta-D-glucose. This chain is Intelectin-like protein, found in Alligator mississippiensis (American alligator).